Consider the following 249-residue polypeptide: DNA polymerase sliding clamp 1 (249 aa).

This sequence belongs to the PCNA family. Forms heterodimers with PCNA2, which then recruit PCNA3; does not form homotrimers. The heterodimers interact with RfcS homotetramers. Heterotrimer which circularizes head-to-tail (head is at N-terminus, tail is at C-terminus) to form a toroid; DNA passes through its center. Replication factor C (RFC) is required to load the toroid on the DNA. Heterotrimer interacts, probably via this subunit, with flap endonuclease 1 (fen), Hjc, Dpo4, and XPF.

One of the sliding clamp subunits that acts as a moving platform for DNA processing. Responsible for tethering the catalytic subunit of DNA polymerase to DNA during high-speed replication. Heterotrimer stimulates the Holliday junction resolvase Hjc. DNA polymerase I, DNA ligase and the flap endonuclease may be constitutively associated with the PCNA heterotrimer forming a scanning complex able to couple DNA synthesis and Okazaki fragment maturation. The chain is DNA polymerase sliding clamp 1 from Saccharolobus solfataricus (strain ATCC 35092 / DSM 1617 / JCM 11322 / P2) (Sulfolobus solfataricus).